The primary structure comprises 149 residues: 3-dehydroquinate dehydratase (149 aa).

Tyrosine 26 (proton acceptor) is an active-site residue. Residues asparagine 78, histidine 84, and aspartate 91 each coordinate substrate. Histidine 104 acts as the Proton donor in catalysis. Substrate is bound by residues 105 to 106 (LS) and arginine 115.

It belongs to the type-II 3-dehydroquinase family. As to quaternary structure, homododecamer.

The enzyme catalyses 3-dehydroquinate = 3-dehydroshikimate + H2O. It functions in the pathway metabolic intermediate biosynthesis; chorismate biosynthesis; chorismate from D-erythrose 4-phosphate and phosphoenolpyruvate: step 3/7. Its function is as follows. Catalyzes a trans-dehydration via an enolate intermediate. The protein is 3-dehydroquinate dehydratase of Polynucleobacter asymbioticus (strain DSM 18221 / CIP 109841 / QLW-P1DMWA-1) (Polynucleobacter necessarius subsp. asymbioticus).